Consider the following 326-residue polypeptide: Acetyl-coenzyme A carboxylase carboxyl transferase subunit beta (326 aa).

The region spanning Leu-29–Thr-298 is the CoA carboxyltransferase N-terminal domain. Cys-33, Cys-36, Cys-52, and Cys-55 together coordinate Zn(2+). The C4-type zinc finger occupies Cys-33–Cys-55. A disordered region spans residues Cys-302–Gly-326. Positions Glu-309–Gly-326 are enriched in polar residues.

The protein belongs to the AccD/PCCB family. In terms of assembly, acetyl-CoA carboxylase is a heterohexamer composed of biotin carboxyl carrier protein (AccB), biotin carboxylase (AccC) and two subunits each of ACCase subunit alpha (AccA) and ACCase subunit beta (AccD). The cofactor is Zn(2+).

It is found in the cytoplasm. The catalysed reaction is N(6)-carboxybiotinyl-L-lysyl-[protein] + acetyl-CoA = N(6)-biotinyl-L-lysyl-[protein] + malonyl-CoA. The protein operates within lipid metabolism; malonyl-CoA biosynthesis; malonyl-CoA from acetyl-CoA: step 1/1. Functionally, component of the acetyl coenzyme A carboxylase (ACC) complex. Biotin carboxylase (BC) catalyzes the carboxylation of biotin on its carrier protein (BCCP) and then the CO(2) group is transferred by the transcarboxylase to acetyl-CoA to form malonyl-CoA. This chain is Acetyl-coenzyme A carboxylase carboxyl transferase subunit beta, found in Trichodesmium erythraeum (strain IMS101).